The following is a 396-amino-acid chain: Gap junction gamma-1 protein (396 aa).

Residues 1–22 are Cytoplasmic-facing; sequence MSWSFLTRLLEEIHNHSTFVGK. A helical membrane pass occupies residues 23–45; sequence IWLTVLIVFRIVLTAVGGESIYY. The Extracellular segment spans residues 46-75; the sequence is DEQSKFVCNTEQPGCENVCYDAFAPLSHVR. The chain crosses the membrane as a helical span at residues 76-95; that stretch reads FWVFQIILVATPSVMYLGYA. At 96–175 the chain is on the cytoplasmic side; it reads IHKIAKMEHG…RRIREDGLMK (80 aa). The segment at 145–165 is disordered; it reads ELESDKENKEQSQPKPKHDGR. The segment covering 147–156 has biased composition (basic and acidic residues); it reads ESDKENKEQS. A helical transmembrane segment spans residues 176 to 198; the sequence is IYVLQLLARTVFEVGFLIGQYFL. At 199-228 the chain is on the extracellular side; sequence YGFQVHPFYVCSRLPCPHKIDCFISRPTEK. Residues 229–248 form a helical membrane-spanning segment; that stretch reads TIFLLIMYGVTGLCLLLNIW. Topologically, residues 249 to 396 are cytoplasmic; sequence EMLHLGFGTI…SGDGKTSVWI (148 aa). Residues 353 to 396 form a disordered region; that stretch reads VQAYSHQNNPHGPREKKAKVGSKAGSNKSTASSKSGDGKTSVWI. Over residues 376–387 the composition is skewed to polar residues; sequence AGSNKSTASSKS.

Belongs to the connexin family. Gamma-type subfamily. As to quaternary structure, a connexon is composed of a hexamer of connexins. Interacts with CNST.

The protein resides in the cell membrane. Its subcellular location is the cell junction. It localises to the gap junction. Its function is as follows. One gap junction consists of a cluster of closely packed pairs of transmembrane channels, the connexons, through which materials of low MW diffuse from one cell to a neighboring cell. This is Gap junction gamma-1 protein (GJC1) from Homo sapiens (Human).